Reading from the N-terminus, the 480-residue chain is Adenosylmethionine-8-amino-7-oxononanoate aminotransferase (480 aa).

Residue 126 to 127 (GS) participates in pyridoxal 5'-phosphate binding. Tyr-160 is a binding site for substrate. Asp-270 contributes to the pyridoxal 5'-phosphate binding site. An N6-(pyridoxal phosphate)lysine modification is found at Lys-314. Residue Gly-350 participates in substrate binding. 351-352 (PT) contacts pyridoxal 5'-phosphate. Substrate is bound at residue Arg-441.

The protein belongs to the class-III pyridoxal-phosphate-dependent aminotransferase family. BioA subfamily. The cofactor is pyridoxal 5'-phosphate.

It catalyses the reaction (8S)-8-amino-7-oxononanoate + S-adenosyl-L-methionine = S-adenosyl-4-methylsulfanyl-2-oxobutanoate + (7R,8S)-7,8-diammoniononanoate. The protein operates within cofactor biosynthesis; biotin biosynthesis; 7,8-diaminononanoate from 8-amino-7-oxononanoate (SAM route): step 1/1. Catalyzes the transfer of the alpha-amino group from S-adenosyl-L-methionine (SAM) to 7-keto-8-aminopelargonic acid (KAPA) to form 7,8-diaminopelargonic acid (DAPA). It is the only aminotransferase known to utilize SAM as an amino donor. This chain is Adenosylmethionine-8-amino-7-oxononanoate aminotransferase, found in Saccharomyces cerevisiae (strain ATCC 204508 / S288c) (Baker's yeast).